The sequence spans 147 residues: Large ribosomal subunit protein bL9 (147 aa).

It belongs to the bacterial ribosomal protein bL9 family.

Binds to the 23S rRNA. The protein is Large ribosomal subunit protein bL9 of Campylobacter jejuni subsp. jejuni serotype O:23/36 (strain 81-176).